We begin with the raw amino-acid sequence, 268 residues long: Interleukin-1 beta (268 aa).

Residues 1-116 (MAEVPELASE…TRNNDACVHD (116 aa)) constitute a propeptide that is removed on maturation.

The protein belongs to the IL-1 family. As to quaternary structure, monomer. In its precursor form, weakly interacts with full-length MEFV; the mature cytokine does not interact at all. Interacts with integrins ITGAV:ITGBV and ITGA5:ITGB1; integrin-binding is required for IL1B signaling. Interacts with cargo receptor TMED10; the interaction is direct and is required for the secretion of IL1B mature form. Interacts with HSP90AB1; the interaction facilitates cargo translocation into the ERGIC. Interacts with HSP90B1; the interaction facilitates cargo translocation into the ERGIC.

The protein localises to the cytoplasm. It is found in the cytosol. The protein resides in the secreted. Its subcellular location is the lysosome. It localises to the extracellular exosome. Functionally, potent pro-inflammatory cytokine. Initially discovered as the major endogenous pyrogen, induces prostaglandin synthesis, neutrophil influx and activation, T-cell activation and cytokine production, B-cell activation and antibody production, and fibroblast proliferation and collagen production. Promotes Th17 differentiation of T-cells. Synergizes with IL12/interleukin-12 to induce IFNG synthesis from T-helper 1 (Th1) cells. Plays a role in angiogenesis by inducing VEGF production synergistically with TNF and IL6. Involved in transduction of inflammation downstream of pyroptosis: its mature form is specifically released in the extracellular milieu by passing through the gasdermin-D (GSDMD) pore. The protein is Interleukin-1 beta (IL1B) of Macaca fascicularis (Crab-eating macaque).